The chain runs to 79 residues: Acyl carrier protein (79 aa).

The region spanning 2–77 (SEIGERVKKI…DATKFLEKNA (76 aa)) is the Carrier domain. Serine 37 bears the O-(pantetheine 4'-phosphoryl)serine mark.

It belongs to the acyl carrier protein (ACP) family. In terms of processing, 4'-phosphopantetheine is transferred from CoA to a specific serine of apo-ACP by AcpS. This modification is essential for activity because fatty acids are bound in thioester linkage to the sulfhydryl of the prosthetic group.

The protein localises to the cytoplasm. The protein operates within lipid metabolism; fatty acid biosynthesis. Functionally, carrier of the growing fatty acid chain in fatty acid biosynthesis. The polypeptide is Acyl carrier protein (Nitrobacter winogradskyi (strain ATCC 25391 / DSM 10237 / CIP 104748 / NCIMB 11846 / Nb-255)).